Consider the following 384-residue polypeptide: Guanine nucleotide-binding protein alpha-1 subunit (384 aa).

G2 is lipidated: N-myristoyl glycine. The S-palmitoyl cysteine moiety is linked to residue C5. Residues 38-384 (HIRKLLLLGA…RRNLFEAGLL (347 aa)) form the G-alpha domain. Residues 41 to 54 (KLLLLGAGESGKST) form a G1 motif region. Positions 49, 50, 51, 52, 53, 54, 163, 188, 194, 222, 288, 289, 291, and 356 each coordinate GTP. Position 53 (S53) interacts with Mg(2+). Residues 186–194 (DVLLARVRT) form a G2 motif region. Position 194 (T194) interacts with Mg(2+). Positions 215 to 224 (YRLFDVGGQR) are G3 motif. The interval 284–291 (MLFLNKFD) is G4 motif. The interval 354-359 (TTALDQ) is G5 motif.

It belongs to the G-alpha family. In terms of assembly, g proteins are composed of 3 units; alpha, beta and gamma. The alpha chain contains the guanine nucleotide binding site. The cofactor is Mg(2+).

Its function is as follows. Guanine nucleotide-binding proteins (G proteins) are involved as modulators or transducers in various transmembrane signaling systems. The protein is Guanine nucleotide-binding protein alpha-1 subunit (GPA1) of Pisum sativum (Garden pea).